Consider the following 349-residue polypeptide: UDP-N-acetylenolpyruvoylglucosamine reductase (349 aa).

Residues 25–197 enclose the FAD-binding PCMH-type domain; it reads GIAARARFAA…VAVTFRLPKQ (173 aa). Arg173 is a catalytic residue. Catalysis depends on Ser249, which acts as the Proton donor. The active site involves Glu345.

Belongs to the MurB family. The cofactor is FAD.

Its subcellular location is the cytoplasm. The enzyme catalyses UDP-N-acetyl-alpha-D-muramate + NADP(+) = UDP-N-acetyl-3-O-(1-carboxyvinyl)-alpha-D-glucosamine + NADPH + H(+). It functions in the pathway cell wall biogenesis; peptidoglycan biosynthesis. In terms of biological role, cell wall formation. The protein is UDP-N-acetylenolpyruvoylglucosamine reductase of Burkholderia orbicola (strain MC0-3).